The chain runs to 229 residues: Transmembrane protein 182 (229 aa).

An N-terminal signal peptide occupies residues 1-26; that stretch reads MRLNVAVFFGALFGALGVLLFLVAFG. Residues 27-114 lie on the Extracellular side of the membrane; the sequence is SDYWLLATEV…SYDSAIIYRG (88 aa). Asparagine 47 is a glycosylation site (N-linked (GlcNAc...) asparagine). The interval 49-59 is interaction with ITGB1; it reads TFHHEGFFWRC. Residues asparagine 68, asparagine 85, and asparagine 102 are each glycosylated (N-linked (GlcNAc...) asparagine). A helical transmembrane segment spans residues 115-135; it reads FWAVLLLLGVVAALTASFLII. The Cytoplasmic segment spans residues 136 to 153; the sequence is CAAPFSSHFLYKAGGGSY. The helical transmembrane segment at 154 to 174 threads the bilayer; the sequence is IASGVLFSLVVILYVIWVQAV. Residues 175–200 are Extracellular-facing; that stretch reads ADMESYRALRMRDCWEFTPSILYGWS. A helical transmembrane segment spans residues 201–221; the sequence is FFLAPAGVFFSLLAGLLFLVV. At 222-229 the chain is on the cytoplasmic side; that stretch reads GRHIQIHH.

Belongs to the TMEM182 family. As to quaternary structure, interacts with ITGB1. In terms of tissue distribution, highly expressed in white adipose tissues (WAT), with 10-fold to 20-fold higher levels than in brown adipose tissue (BAT). Also expressed in skeletal muscle, heart and lung. Lower relative levels of expression in kidney, spleen, testis, brain and liver.

It is found in the cell membrane. In terms of biological role, negatively regulates myogenesis and skeletal muscle regeneration via its association with ITGB1. Modulates ITGB1 activation by decreasing ITGB1-LAMB1 interaction and inhibiting ITGB1-mediated intracellular signaling during myogenesis. This chain is Transmembrane protein 182 (Tmem182), found in Mus musculus (Mouse).